We begin with the raw amino-acid sequence, 177 residues long: Large ribosomal subunit protein uL30 (177 aa).

This sequence belongs to the universal ribosomal protein uL30 family. In terms of assembly, part of the 50S ribosomal subunit.

In Pyrobaculum islandicum (strain DSM 4184 / JCM 9189 / GEO3), this protein is Large ribosomal subunit protein uL30.